A 782-amino-acid chain; its full sequence is Protein phosphatase 1 regulatory subunit 12C (782 aa).

Low complexity predominate over residues 1–17; sequence MSGEDGPAAGPGAAAAA. The disordered stretch occupies residues 1–43; sequence MSGEDGPAAGPGAAAAAARERRREQLRQWGARAGAEPGPGERR. Ser-2 carries the post-translational modification N-acetylserine. 4 ANK repeats span residues 100 to 129, 133 to 162, 226 to 255, and 259 to 288; these read DGIS…TVNQ, EGWT…NIAA, TGAS…DPEL, and DGWT…GMDS. Positions 297–329 form a coiled coil; the sequence is CDLADEEVLSLLEELARKQEDLRNQKEASQSRG. The tract at residues 316 to 686 is disordered; that stretch reads EDLRNQKEAS…EEPDGGFRTL (371 aa). Residues 323-337 are compositionally biased toward polar residues; it reads EASQSRGQEPQAPSS. The span at 349-365 shows a compositional bias: basic and acidic residues; it reads SSREKISLQDLSKERRP. Over residues 374 to 383 the composition is skewed to acidic residues; the sequence is QDEDEGEEGP. Ser-399, Ser-407, Ser-427, Ser-452, and Ser-509 each carry phosphoserine. Residues 449-463 show a composition bias toward polar residues; that stretch reads RSASSSWLEGTSTQA. Positions 537–546 are enriched in basic and acidic residues; it reads VRDEESESQR. Over residues 547–557 the composition is skewed to basic residues; that stretch reads KARSRLMRQSR. At Thr-560 the chain carries Phosphothreonine; by CDC42BP and ROCK2. Residues 567-583 show a composition bias toward basic and acidic residues; the sequence is DLKEAEKAAGKAPESEK. Ser-604 and Ser-647 each carry phosphoserine. Over residues 670 to 680 the composition is skewed to acidic residues; sequence PEPEPESEEPD. Residues 681–782 are a coiled coil; it reads GGFRTLYAEL…LIRVISKLSK (102 aa).

In terms of assembly, PP1 comprises a catalytic subunit, PPP1CA, PPP1CB or PPP1CC, and one or several targeting or regulatory subunits. PPP1R12C mediates binding to myosin. Interacts via its N-terminus with PPP1CB. Interacts with IL16. Interacts with the coiled-coil domain of MPRIP. Interacts with NOD2. In terms of processing, phosphorylation at Thr-560 is essential for its interaction with PPP1CB. In terms of tissue distribution, ubiquitously expressed. Highly expressed in heart.

It localises to the cytoplasm. The protein resides in the cytoskeleton. It is found in the stress fiber. In terms of biological role, regulates myosin phosphatase activity. The polypeptide is Protein phosphatase 1 regulatory subunit 12C (Homo sapiens (Human)).